The primary structure comprises 119 residues: Large ribosomal subunit protein bL20 (119 aa).

Belongs to the bacterial ribosomal protein bL20 family.

Functionally, binds directly to 23S ribosomal RNA and is necessary for the in vitro assembly process of the 50S ribosomal subunit. It is not involved in the protein synthesizing functions of that subunit. In Clostridium kluyveri (strain NBRC 12016), this protein is Large ribosomal subunit protein bL20.